Here is a 241-residue protein sequence, read N- to C-terminus: Tetrahydromethanopterin S-methyltransferase subunit A (241 aa).

Topologically, residues 1-220 (MANKREPAPG…AKWQAGYYNG (220 aa)) are cytoplasmic. Histidine 85 is a binding site for 5-hydroxybenzimidazolylcob(I)amide. The helical transmembrane segment at 221–241 (KIQGIATGLFLMLLIMGILMF) threads the bilayer.

This sequence belongs to the MtrA family. In terms of assembly, the complex is composed of 8 subunits; MtrA, MtrB, MtrC, MtrD, MtrE, MtrF, MtrG and MtrH. It depends on 5-hydroxybenzimidazolylcob(I)amide as a cofactor.

It localises to the cell membrane. It carries out the reaction 5-methyl-5,6,7,8-tetrahydromethanopterin + coenzyme M + 2 Na(+)(in) = 5,6,7,8-tetrahydromethanopterin + methyl-coenzyme M + 2 Na(+)(out). Its pathway is one-carbon metabolism; methanogenesis from CO(2); methyl-coenzyme M from 5,10-methylene-5,6,7,8-tetrahydromethanopterin: step 2/2. Part of a complex that catalyzes the formation of methyl-coenzyme M and tetrahydromethanopterin from coenzyme M and methyl-tetrahydromethanopterin. This is an energy-conserving, sodium-ion translocating step. The polypeptide is Tetrahydromethanopterin S-methyltransferase subunit A (Methanocaldococcus jannaschii (strain ATCC 43067 / DSM 2661 / JAL-1 / JCM 10045 / NBRC 100440) (Methanococcus jannaschii)).